The sequence spans 273 residues: E3 ubiquitin-protein ligase SDIR1 (273 aa).

The Cytoplasmic portion of the chain corresponds to 1–33 (MSFVFRGSRGDLESGFSGGFLPERRAMRVHGAR). The chain crosses the membrane as a helical span at residues 34-54 (PVNSNSLAFLVTVLLLFMILN). Residues 55 to 56 (SH) are Lumenal-facing. A helical transmembrane segment spans residues 57-77 (QMPPNFLLWLVLGVFLMATTL). Topologically, residues 78 to 273 (RMYATCQQLQ…EIDDDASDMV (196 aa)) are cytoplasmic. An RING-type; atypical zinc finger spans residues 211 to 252 (CSVCLEQVTVGEIVRTLPCLHQFHAGCIDPWLRQQGTCPVCK).

In terms of assembly, interacts with ATP1/SDIRIP1. In terms of tissue distribution, ubiquitous.

The protein resides in the endoplasmic reticulum membrane. The enzyme catalyses S-ubiquitinyl-[E2 ubiquitin-conjugating enzyme]-L-cysteine + [acceptor protein]-L-lysine = [E2 ubiquitin-conjugating enzyme]-L-cysteine + N(6)-ubiquitinyl-[acceptor protein]-L-lysine.. In terms of biological role, E3 ubiquitin-protein ligase that acts as a positive regulator of abscisic acid-related stress signal transduction. Interacts with and ubiquitinates ATP1/SDIRIP1 to modulate ATP1/SDIRIP1 stability through the 26S proteasome pathway. Regulates abscisic acid (ABA) and salt stress responses by negatively affecting ATP1/SDIRIP1 stability. The SDIR1-ATP1/SDIRIP1 complex plays an important role in ABA signaling through the ubiquitination pathway. The polypeptide is E3 ubiquitin-protein ligase SDIR1 (Arabidopsis thaliana (Mouse-ear cress)).